Reading from the N-terminus, the 361-residue chain is Thermostable alkaline protease (361 aa).

A signal peptide spans 1–24 (MRQSLKVMVLSTVALLFMANPAAA). Residues 25–93 (SEEKKEYLIV…IEKNAEVTIS (69 aa)) constitute a propeptide that is removed on maturation. Position 94 (Q94) interacts with Ca(2+). In terms of domain architecture, Peptidase S8 spans 97-360 (PWGISFINTQ…NGLVHAGRAT (264 aa)). The active-site Charge relay system is the D124. Residue D132 participates in Ca(2+) binding. H154 acts as the Charge relay system in catalysis. Residues L165, N167, I169, V171, A255, Y257, and V260 each contribute to the Ca(2+) site. S307 (charge relay system) is an active-site residue.

The protein belongs to the peptidase S8 family. Requires Ca(2+) as cofactor.

The protein localises to the secreted. Shows keratinolytic activity. This Halalkalibacterium halodurans (strain ATCC BAA-125 / DSM 18197 / FERM 7344 / JCM 9153 / C-125) (Bacillus halodurans) protein is Thermostable alkaline protease.